The sequence spans 334 residues: Probable tRNA pseudouridine synthase B (334 aa).

The Nucleophile role is filled by aspartate 82. The PUA domain occupies 250–325 (LPKVWIRDSA…IAVDVDKVFM (76 aa)).

This sequence belongs to the pseudouridine synthase TruB family. Type 2 subfamily.

The enzyme catalyses uridine(55) in tRNA = pseudouridine(55) in tRNA. Its function is as follows. Could be responsible for synthesis of pseudouridine from uracil-55 in the psi GC loop of transfer RNAs. The protein is Probable tRNA pseudouridine synthase B of Thermococcus onnurineus (strain NA1).